A 286-amino-acid chain; its full sequence is MAMISYSTIVVALLASFMICSVSANFQRDVEITWGDGRGQITNNGDLLTLSLDKASGSGFQSKNEYLFGKIDMQIKLVAGNSAGTVTAYYLKSPGSTWDEIDFEFLGNLSGDPYTLHTNVFTQGKGDREQQFKLWFDPTSDFHTYSILWNPQRIIFSVDGTPIREFKNMESQGTLFPKNQPMRMYSSLWNAEEWATRGGLVKTDWSKAPFTASYRGFNEEACVVINGQSSCPNVSGQGSTGSWLSQELDSTGQEQMRWVQNNYMIYNYCTDAKRFPQGLPRECLAA.

Residues 1–24 form the signal peptide; that stretch reads MAMISYSTIVVALLASFMICSVSA. Residues 25 to 214 form the GH16 domain; that stretch reads NFQRDVEITW…WSKAPFTASY (190 aa). Catalysis depends on glutamate 100, which acts as the Nucleophile. Glutamate 104 serves as the catalytic Proton donor. Glutamate 104 is a binding site for xyloglucan. N-linked (GlcNAc...) asparagine glycosylation is present at asparagine 108. Xyloglucan-binding positions include 117 to 119, 127 to 129, 193 to 194, and glycine 198; these read HTN, DRE, and EW. A disulfide bridge links cysteine 222 with cysteine 231. A glycan (N-linked (GlcNAc...) asparagine) is linked at asparagine 233. Cysteine 269 and cysteine 283 are oxidised to a cystine. Arginine 274 is a binding site for xyloglucan.

This sequence belongs to the glycosyl hydrolase 16 family. XTH group 2 subfamily. Contains at least one intrachain disulfide bond essential for its enzymatic activity.

Its subcellular location is the secreted. It localises to the cell wall. The protein resides in the extracellular space. The protein localises to the apoplast. The catalysed reaction is breaks a beta-(1-&gt;4) bond in the backbone of a xyloglucan and transfers the xyloglucanyl segment on to O-4 of the non-reducing terminal glucose residue of an acceptor, which can be a xyloglucan or an oligosaccharide of xyloglucan.. Catalyzes xyloglucan endohydrolysis (XEH) and/or endotransglycosylation (XET). Cleaves and religates xyloglucan polymers, an essential constituent of the primary cell wall, and thereby participates in cell wall construction of growing tissues. This chain is Probable xyloglucan endotransglucosylase/hydrolase protein 23 (XTH23), found in Arabidopsis thaliana (Mouse-ear cress).